A 536-amino-acid polypeptide reads, in one-letter code: MPFGKKARHVKAYQFGADAPQEGMEAVLEQHRLRTDYYNALVEMELRQREERTALLANLAAESGLESPNQVYERLKAAGEKGIRKHPEYVAARERQKALYGHPRLLELQSRQREERNALRRSFGAKGLYSSNYLDVERAFDKARQSPELRFRRYSPHEGRLAVLYTEGLPMREIGSDTRVQLPLPDPIIYRDRATRRKHQRVLMKFRVRSVERQPLWITVPVYLHRELPDGVCREVSLHWHRVADRLRWTVSVVVEVEGPPVASPTGRGAVAVDLGWRRVEGGLRAGFWVGEDGAGGEIALSEGDLKQFSKVEDLRSIRDQHLNALKEALAAWLEAPPAPLPDWLAEETKTLPQWRSPARFAALFRRWQSERVHADEAAYGLLEGWHKRDRHLWQYEANLREQMILRRREQYRVLAATLARQYDALIVEDFNLRAAAELDQGGSDLPDAARRYRTIASPSTLRDALVNAFAQRGKPVRKLNPAHTTTDCHACGGALVGDPAKELRLYCPTCERFYDQDENAARNLLRRAQEVQAQV.

A recognition domain (REC1-N) region spans residues 1-59 (MPFGKKARHVKAYQFGADAPQEGMEAVLEQHRLRTDYYNALVEMELRQREERTALLANL). The interval 60–105 (AAESGLESPNQVYERLKAAGEKGIRKHPEYVAARERQKALYGHPRL) is recognition domain (REC2). Positions 106–159 (LELQSRQREERNALRRSFGAKGLYSSNYLDVERAFDKARQSPELRFRRYSPHEG) are recognition domain (REC1-C). Positions 160–257 (RLAVLYTEGL…RWTVSVVVEV (98 aa)) are wedge domain (WED). A linker region spans residues 258-270 (EGPPVASPTGRGA). A ruvC-I region spans residues 271–481 (VAVDLGWRRV…QRGKPVRKLN (211 aa)). Residues 482–516 (PAHTTTDCHACGGALVGDPAKELRLYCPTCERFYD) are target nucleic-acid binding (TNB). Zn(2+)-binding residues include C489, C492, C508, and C511. The tract at residues 517–536 (QDENAARNLLRRAQEVQAQV) is ruvC-II. D518 contributes to the Mg(2+) binding site.

It belongs to the CRISPR-associated DNA-binding protein Cas12m family. It depends on Mg(2+) as a cofactor. Zn(2+) is required as a cofactor.

Its activity is regulated as follows. Pre-crRNA processing is inhibited by EDTA. Functionally, CRISPR (clustered regularly interspaced short palindromic repeat), is an adaptive immune system that provides protection against mobile genetic elements (viruses, transposable elements and conjugative plasmids). CRISPR clusters contain sequences complementary to antecedent mobile elements and target invading nucleic acids. CRISPR clusters are transcribed and processed into CRISPR RNA (crRNA). Recognizes a short motif in the CRISPR repeat sequences (the 5' PAM or protospacer adjacent motif, 5'-TT/CN-3' in this organism) to help distinguish self versus nonself, as targets within the bacterial CRISPR locus do not have PAMs. Cas12m-crRNA binds DNA in a PAM-dependent, crRNA-guided fashion. DNA-binding probably inhibits transcription, leading to gene silencing. No dsDNA, ssDNA or RNA nuclease activity is seen for the crRNA-Cas12m complex. Upon expression in E.coli as a CRISPR region preferentially binds to its associated crRNA. Is required to process pre-crRNA to mature crRNA without a tracrRNA; processing is Mg(2+)-dependent and does not require the predicted RuvC domain catalytic site. This chain is CRISPR-associated DNA-binding protein Cas12m, found in Allomeiothermus silvanus (strain ATCC 700542 / DSM 9946 / NBRC 106475 / NCIMB 13440 / VI-R2) (Thermus silvanus).